Reading from the N-terminus, the 185-residue chain is Ribosome-recycling factor (185 aa).

The interval 136 to 159 (NEQLKSQQKDGKMSEDELKRSQDE) is disordered.

Belongs to the RRF family.

Its subcellular location is the cytoplasm. Responsible for the release of ribosomes from messenger RNA at the termination of protein biosynthesis. May increase the efficiency of translation by recycling ribosomes from one round of translation to another. This is Ribosome-recycling factor from Pelotomaculum thermopropionicum (strain DSM 13744 / JCM 10971 / SI).